We begin with the raw amino-acid sequence, 439 residues long: Large ribosomal subunit protein mL65 (439 aa).

The protein belongs to the mitochondrion-specific ribosomal protein mL65 family. Component of the mitochondrial large ribosomal subunit (mt-LSU). Mature mammalian 55S mitochondrial ribosomes consist of a small (28S) and a large (39S) subunit. The 28S small subunit contains a 12S ribosomal RNA (12S mt-rRNA) and 30 different proteins. The 39S large subunit contains a 16S rRNA (16S mt-rRNA), a copy of mitochondrial valine transfer RNA (mt-tRNA(Val)), which plays an integral structural role, and 52 different proteins. mL65 forms a heterodimer with mL37. Heart, skeletal muscle, kidney and liver. Lower expression in placenta and peripheral blood leukocytes.

It is found in the mitochondrion. This chain is Large ribosomal subunit protein mL65 (MRPS30), found in Homo sapiens (Human).